We begin with the raw amino-acid sequence, 478 residues long: Cytochrome c-552 (478 aa).

The N-terminal stretch at 1-26 (MARTILRARRFFSLILPFFFISSVYA) is a signal peptide. Residue His-94 participates in heme c binding. Heme contacts are provided by Cys-122, Cys-125, and Lys-126. 6 residues coordinate heme c: Cys-160, Cys-163, His-164, Cys-209, Cys-212, and His-213. Ca(2+)-binding residues include Glu-215, Tyr-216, Lys-261, and Gln-263. Residue Tyr-216 coordinates substrate. His-264 serves as a coordination point for substrate. Positions 275, 282, 285, 286, 301, 314, 317, 318, and 393 each coordinate heme c.

It belongs to the cytochrome c-552 family. It depends on Ca(2+) as a cofactor. Heme c is required as a cofactor.

Its subcellular location is the periplasm. It catalyses the reaction 6 Fe(III)-[cytochrome c] + NH4(+) + 2 H2O = 6 Fe(II)-[cytochrome c] + nitrite + 8 H(+). The protein operates within nitrogen metabolism; nitrate reduction (assimilation). Catalyzes the reduction of nitrite to ammonia, consuming six electrons in the process. The chain is Cytochrome c-552 from Citrobacter koseri (strain ATCC BAA-895 / CDC 4225-83 / SGSC4696).